Consider the following 81-residue polypeptide: Small ribosomal subunit protein bS18 (81 aa).

The protein belongs to the bacterial ribosomal protein bS18 family. In terms of assembly, part of the 30S ribosomal subunit. Forms a tight heterodimer with protein bS6.

Binds as a heterodimer with protein bS6 to the central domain of the 16S rRNA, where it helps stabilize the platform of the 30S subunit. This Leptospira borgpetersenii serovar Hardjo-bovis (strain JB197) protein is Small ribosomal subunit protein bS18.